Here is a 190-residue protein sequence, read N- to C-terminus: uncharacterized protein (190 aa).

At 1-55 (MSRLRRFNRKILSLSSDYTHDGESDQEDVSILPLDTEEQEELIQKFETNAHITNK) the chain is on the cytoplasmic side. A helical transmembrane segment spans residues 56–76 (LYINLLSILYLLYGGLLMILV). At 77-80 (RKSR) the chain is on the extracellular side. The chain crosses the membrane as a helical span at residues 81-101 (GYIKLALLAGANSLICSCITL). The Cytoplasmic portion of the chain corresponds to 102 to 123 (RYDIVNDYLLFKKFKLRVSNFS). Residues 124–144 (INIINIILLVLMAWISFNHVV) form a helical membrane-spanning segment. The Extracellular segment spans residues 145–149 (EDKKT). Residues 150 to 170 (VLCLQVPMFLFWVAVLVKRWA) traverse the membrane as a helical segment. The Cytoplasmic portion of the chain corresponds to 171-190 (RNIEDEIADLRCLKYKYKNA).

The protein resides in the membrane. This is an uncharacterized protein from Saccharomyces cerevisiae (strain ATCC 204508 / S288c) (Baker's yeast).